The sequence spans 238 residues: ATP synthase subunit a, chloroplastic (238 aa).

5 helical membrane-spanning segments follow: residues 27 to 47 (GQVL…SFLG), 86 to 106 (VPFL…GALL), 125 to 145 (INTT…AGIS), 190 to 210 (LVVG…IMLL), and 211 to 231 (GVFT…AYIN).

Belongs to the ATPase A chain family. As to quaternary structure, F-type ATPases have 2 components, F(1) - the catalytic core - and F(0) - the membrane proton channel. F(1) has five subunits: alpha(3), beta(3), gamma(1), delta(1), epsilon(1). F(0) has four main subunits: a(1), b(1), b'(1) and c(10-14). The alpha and beta chains form an alternating ring which encloses part of the gamma chain. F(1) is attached to F(0) by a central stalk formed by the gamma and epsilon chains, while a peripheral stalk is formed by the delta, b and b' chains.

It is found in the plastid. It localises to the chloroplast thylakoid membrane. Its function is as follows. F(1)F(0) ATP synthase produces ATP from ADP in the presence of a proton or sodium gradient. F-type ATPases consist of two structural domains, F(1) containing the extramembraneous catalytic core and F(0) containing the membrane proton channel, linked together by a central stalk and a peripheral stalk. During catalysis, ATP synthesis in the catalytic domain of F(1) is coupled via a rotary mechanism of the central stalk subunits to proton translocation. In Chlamydomonas reinhardtii (Chlamydomonas smithii), this protein is ATP synthase subunit a, chloroplastic.